A 278-amino-acid chain; its full sequence is Embryonic polyadenylate-binding protein 2 (278 aa).

2 disordered regions span residues 21–66 (VSSD…GDAG) and 101–128 (EGTPRPPGVQQQAEEEEGTAAGQLLSPE). Residues 35 to 50 (ETKEILGPEGGEGKEE) show a composition bias toward basic and acidic residues. Residues 51–63 (KEEEEDAEEDQDG) are compositionally biased toward acidic residues. The RRM domain occupies 147-224 (RSVYVGNVDY…RVIKVLPKRT (78 aa)). The tract at residues 227–278 (PGISSTDRGGLRGHPGSRGAPFPHSGLQGRPRLRPQGQNRARGKFSPWFSPY) is disordered.

As to expression, expressed in various adult tissues.

The protein resides in the cytoplasm. Functionally, binds the poly(A) tail of mRNA. The polypeptide is Embryonic polyadenylate-binding protein 2 (PABPN1L) (Homo sapiens (Human)).